Reading from the N-terminus, the 333-residue chain is COMPASS-like H3K4 histone methylase component WDR5B (333 aa).

WD repeat units follow at residues M1 to E40, G41 to R80, G83 to K122, G126 to K167, H169 to T207, D211 to T252, G253 to R295, and G298 to A333.

In terms of assembly, unlike WDR5A, does not interact with RBL or TRO.

This Arabidopsis thaliana (Mouse-ear cress) protein is COMPASS-like H3K4 histone methylase component WDR5B.